The following is a 65-amino-acid chain: Large ribosomal subunit protein bL35 (65 aa).

The protein belongs to the bacterial ribosomal protein bL35 family.

The sequence is that of Large ribosomal subunit protein bL35 from Nitrosomonas eutropha (strain DSM 101675 / C91 / Nm57).